A 267-amino-acid polypeptide reads, in one-letter code: 5'-nucleotidase SurE (267 aa).

Residues Asp-9, Asp-10, Ser-40, and Asn-97 each contribute to the a divalent metal cation site.

This sequence belongs to the SurE nucleotidase family. It depends on a divalent metal cation as a cofactor.

Its subcellular location is the cytoplasm. The catalysed reaction is a ribonucleoside 5'-phosphate + H2O = a ribonucleoside + phosphate. Functionally, nucleotidase that shows phosphatase activity on nucleoside 5'-monophosphates. The chain is 5'-nucleotidase SurE from Helicobacter pylori (strain Shi470).